A 336-amino-acid chain; its full sequence is Effector SCP41 (336 aa).

A signal peptide spans 1–19; it reads MRTETASLLLLAALSVAEE. Disordered regions lie at residues 59–99 and 189–230; these read LFSP…STNN and PVGN…GQKG. Over residues 63 to 74 the composition is skewed to low complexity; that stretch reads QQQQQQQQQQQQ.

In terms of assembly, interacts with A.thaliana CBP60G; the interaction is direct. Interacts with A.thaliana SARD1. Interacts with G.hirsutum CBP60B.

It localises to the secreted. The protein resides in the host nucleus. Its function is as follows. Effector that binds transcription regulators in the host plant to suppress the host's innate immune response. Inhibits the host plant transcription regulators CBP60G and SARD1. In Verticillium dahliae (strain VdLs.17 / ATCC MYA-4575 / FGSC 10137) (Verticillium wilt), this protein is Effector SCP41.